Here is a 472-residue protein sequence, read N- to C-terminus: ATP synthase subunit beta (472 aa).

G157–T164 serves as a coordination point for ATP.

It belongs to the ATPase alpha/beta chains family. As to quaternary structure, F-type ATPases have 2 components, CF(1) - the catalytic core - and CF(0) - the membrane proton channel. CF(1) has five subunits: alpha(3), beta(3), gamma(1), delta(1), epsilon(1). CF(0) has three main subunits: a(1), b(2) and c(9-12). The alpha and beta chains form an alternating ring which encloses part of the gamma chain. CF(1) is attached to CF(0) by a central stalk formed by the gamma and epsilon chains, while a peripheral stalk is formed by the delta and b chains.

It localises to the cell membrane. It carries out the reaction ATP + H2O + 4 H(+)(in) = ADP + phosphate + 5 H(+)(out). In terms of biological role, produces ATP from ADP in the presence of a proton gradient across the membrane. The catalytic sites are hosted primarily by the beta subunits. The protein is ATP synthase subunit beta of Desulforudis audaxviator (strain MP104C).